The sequence spans 668 residues: Hemocyanin subunit D (668 aa).

An N-terminal signal peptide occupies residues 1–22; it reads MDTRVLRLTLALVALSGVLADS. Positions 206, 210, and 236 each coordinate Cu cation. The N-linked (GlcNAc...) asparagine glycan is linked to Asn-322. Cu cation is bound by residues His-357, His-361, and His-397. Cysteines 567 and 614 form a disulfide.

The protein belongs to the tyrosinase family. Hemocyanin subfamily. In terms of assembly, 36-chain polymer consisting of 6 hexamers, each of which includes 4 different chains, A, B, C and D. Hemolymph.

It is found in the secreted. It localises to the extracellular space. Its function is as follows. Hemocyanins are copper-containing oxygen carriers occurring freely dissolved in the hemolymph of many mollusks and arthropods. The protein is Hemocyanin subunit D (HCD) of Scutigera coleoptrata (House centipede).